A 750-amino-acid chain; its full sequence is Ribosomal RNA large subunit methyltransferase K/L (750 aa).

The region spanning 46-157 (TAYRLCLWSR…RGEAILSLDL (112 aa)) is the THUMP domain.

Belongs to the methyltransferase superfamily. RlmKL family.

It localises to the cytoplasm. The enzyme catalyses guanosine(2445) in 23S rRNA + S-adenosyl-L-methionine = N(2)-methylguanosine(2445) in 23S rRNA + S-adenosyl-L-homocysteine + H(+). It carries out the reaction guanosine(2069) in 23S rRNA + S-adenosyl-L-methionine = N(2)-methylguanosine(2069) in 23S rRNA + S-adenosyl-L-homocysteine + H(+). Functionally, specifically methylates the guanine in position 2445 (m2G2445) and the guanine in position 2069 (m7G2069) of 23S rRNA. This chain is Ribosomal RNA large subunit methyltransferase K/L, found in Pseudomonas syringae pv. syringae (strain B728a).